The following is a 37-amino-acid chain: Esculentin-2A (37 aa).

Cys31 and Cys37 are disulfide-bonded.

This sequence belongs to the frog skin active peptide (FSAP) family. Esculentin subfamily. Expressed by the skin glands.

The protein localises to the secreted. In terms of biological role, shows antibacterial activity against representative Gram-negative and Gram-positive bacterial species, and hemolytic activity. The chain is Esculentin-2A from Pelophylax lessonae (Pool frog).